The following is a 129-amino-acid chain: Iron-sulfur cluster assembly 1 homolog, mitochondrial (129 aa).

The transit peptide at 1–12 directs the protein to the mitochondrion; that stretch reads MSASLVRATVRA. Fe cation contacts are provided by C57, C121, and C123.

This sequence belongs to the HesB/IscA family. In terms of assembly, interacts with CRY2, but not with CRY1 (in vitro).

Its subcellular location is the mitochondrion. Its function is as follows. Involved in the maturation of mitochondrial 4Fe-4S proteins functioning late in the iron-sulfur cluster assembly pathway. Probably involved in the binding of an intermediate of Fe/S cluster assembly. The sequence is that of Iron-sulfur cluster assembly 1 homolog, mitochondrial (ISCA1) from Bos taurus (Bovine).